A 500-amino-acid polypeptide reads, in one-letter code: Matrilin-1 (500 aa).

An N-terminal signal peptide occupies residues 1–29 (MKVTSGPAFALCSLLLLLLLLLQVPDSLS). In terms of domain architecture, VWFA 1 spans 30–226 (LVPQPRGHLC…AKKFQEAFCV (197 aa)). Asparagine 80 carries N-linked (GlcNAc...) asparagine glycosylation. The 41-residue stretch at 227 to 267 (VSDLCATGDHDCEQLCVSSPGSYTCACHEGFTLNSDGKTCN) folds into the EGF-like domain. Intrachain disulfides connect cysteine 231-cysteine 242, cysteine 238-cysteine 251, and cysteine 253-cysteine 266. A VWFA 2 domain is found at 268-457 (VCRGGGSGSA…GKKLQKQICV (190 aa)). Asparagine 348 carries an N-linked (GlcNAc...) asparagine glycan. Residues 471 to 499 (EAKVEGLLQALTRKLEAVSGRLAVLENRI) are a coiled coil.

In terms of assembly, homotrimer. Part of a complex composed of MATN1 (via VWFA1 domain), type 2 collagens and type 6 collagens. Forms a complex (via covalent bonds) with ACAN; the interaction increases in abundance with increasing age of the organism via an increase in occupancy of MATN1 binding sites. Interacts with COMP. Post-translationally, N-glycosylated; reduces binding affinity for type 2 collagens. Expressed in femoral head articular cartilage. Expressed in the trachea and extraskeletal tissue around the eye.

Its subcellular location is the secreted. The protein localises to the extracellular space. The protein resides in the extracellular matrix. In terms of biological role, a major component of the extracellular matrix of non-articular cartilage. Binds to type 2 collagens and forms long concatenated protein networks as part of the extracellular matrix. Required for the network-like organization and bundling of collagen fibrils surrounding chondrocytes in the zones of maturation and hypertrophy. Required for mechanotransduction and adaption to mechanical loading in cartilage chondrocytes, resulting in an increase in expression of the extracellular matrix components ACAN and COL2A1. Acts as a moderator of angiogenesis in response to injury. The polypeptide is Matrilin-1 (Mus musculus (Mouse)).